Reading from the N-terminus, the 193-residue chain is Interferon lambda-2 (193 aa).

The N-terminal stretch at 1–19 (MLLLLLPLLLAAVLTRTQA) is a signal peptide. An N-linked (GlcNAc...) asparagine glycan is attached at Asn-105.

Belongs to the lambda interferon family.

The protein localises to the secreted. In terms of biological role, cytokine with antiviral, antitumour and immunomodulatory activities. Plays a critical role in the antiviral host defense, predominantly in the epithelial tissues. Acts as a ligand for the heterodimeric class II cytokine receptor composed of IL10RB and IFNLR1, and receptor engagement leads to the activation of the JAK/STAT signaling pathway resulting in the expression of IFN-stimulated genes (ISG), which mediate the antiviral state. Has a restricted receptor distribution and therefore restricted targets: is primarily active in epithelial cells and this cell type-selective action is because of the epithelial cell-specific expression of its receptor IFNLR1. Seems not to be essential for early virus-activated host defense in vaginal infection, but plays an important role in Toll-like receptor (TLR)-induced antiviral defense. Plays a significant role in the antiviral immune defense in the intestinal epithelium. Exerts an immunomodulatory effect by up-regulating MHC class I antigen expression. The protein is Interferon lambda-2 (Ifnl2) of Mus musculus (Mouse).